We begin with the raw amino-acid sequence, 480 residues long: ATP synthase subunit beta (480 aa).

153–160 (GGAGVGKT) is a binding site for ATP.

The protein belongs to the ATPase alpha/beta chains family. In terms of assembly, F-type ATPases have 2 components, CF(1) - the catalytic core - and CF(0) - the membrane proton channel. CF(1) has five subunits: alpha(3), beta(3), gamma(1), delta(1), epsilon(1). CF(0) has three main subunits: a(1), b(2) and c(9-12). The alpha and beta chains form an alternating ring which encloses part of the gamma chain. CF(1) is attached to CF(0) by a central stalk formed by the gamma and epsilon chains, while a peripheral stalk is formed by the delta and b chains.

It localises to the cell membrane. The catalysed reaction is ATP + H2O + 4 H(+)(in) = ADP + phosphate + 5 H(+)(out). Its function is as follows. Produces ATP from ADP in the presence of a proton gradient across the membrane. The catalytic sites are hosted primarily by the beta subunits. The chain is ATP synthase subunit beta from Lactobacillus johnsonii (strain CNCM I-12250 / La1 / NCC 533).